We begin with the raw amino-acid sequence, 174 residues long: Small ribosomal subunit protein uS5c (174 aa).

Positions 17 to 80 (WEERVVQVKR…TDAKKHLVTV (64 aa)) constitute an S5 DRBM domain.

It belongs to the universal ribosomal protein uS5 family. As to quaternary structure, part of the 30S ribosomal subunit. Contacts protein S4.

The protein localises to the plastid. Its subcellular location is the chloroplast. In terms of biological role, with S4 and S12 plays an important role in translational accuracy. The sequence is that of Small ribosomal subunit protein uS5c (rps5) from Pyropia yezoensis (Susabi-nori).